Reading from the N-terminus, the 208-residue chain is MTIRVLGIDPGLTRCGVGVVDVRRDRRATLVEVTVIRTPAEMPLEQRLLAVGDGIAALLDRYSPAAVAIERVFAQHNLRTVIGVAQVSGVALHTAAQRGLPVALHTPSEVKAAITGYGSADKKQVQAMVARVLGLPEAPKPADAADALAIAICHAWRGGLAALSTSGAVGAAGPAAVPGAALTPAQAAWRAAERSTARTSSAPRRLAR.

Catalysis depends on residues Asp-9, Glu-70, and Asp-143. Residues Asp-9, Glu-70, and Asp-143 each coordinate Mg(2+).

It belongs to the RuvC family. As to quaternary structure, homodimer which binds Holliday junction (HJ) DNA. The HJ becomes 2-fold symmetrical on binding to RuvC with unstacked arms; it has a different conformation from HJ DNA in complex with RuvA. In the full resolvosome a probable DNA-RuvA(4)-RuvB(12)-RuvC(2) complex forms which resolves the HJ. Mg(2+) is required as a cofactor.

It localises to the cytoplasm. It catalyses the reaction Endonucleolytic cleavage at a junction such as a reciprocal single-stranded crossover between two homologous DNA duplexes (Holliday junction).. Its function is as follows. The RuvA-RuvB-RuvC complex processes Holliday junction (HJ) DNA during genetic recombination and DNA repair. Endonuclease that resolves HJ intermediates. Cleaves cruciform DNA by making single-stranded nicks across the HJ at symmetrical positions within the homologous arms, yielding a 5'-phosphate and a 3'-hydroxyl group; requires a central core of homology in the junction. The consensus cleavage sequence is 5'-(A/T)TT(C/G)-3'. Cleavage occurs on the 3'-side of the TT dinucleotide at the point of strand exchange. HJ branch migration catalyzed by RuvA-RuvB allows RuvC to scan DNA until it finds its consensus sequence, where it cleaves and resolves the cruciform DNA. The sequence is that of Crossover junction endodeoxyribonuclease RuvC from Leifsonia xyli subsp. xyli (strain CTCB07).